A 259-amino-acid chain; its full sequence is Ribosomal RNA small subunit methyltransferase J (259 aa).

Residues 101-102 (RD), 117-118 (ER), 153-154 (SS), and Asp-176 contribute to the S-adenosyl-L-methionine site.

It belongs to the methyltransferase superfamily. RsmJ family.

Its subcellular location is the cytoplasm. It catalyses the reaction guanosine(1516) in 16S rRNA + S-adenosyl-L-methionine = N(2)-methylguanosine(1516) in 16S rRNA + S-adenosyl-L-homocysteine + H(+). Its function is as follows. Specifically methylates the guanosine in position 1516 of 16S rRNA. This chain is Ribosomal RNA small subunit methyltransferase J, found in Vibrio parahaemolyticus serotype O3:K6 (strain RIMD 2210633).